The sequence spans 304 residues: GTP cyclohydrolase FolE2 (304 aa).

The protein belongs to the GTP cyclohydrolase IV family.

It catalyses the reaction GTP + H2O = 7,8-dihydroneopterin 3'-triphosphate + formate + H(+). It functions in the pathway cofactor biosynthesis; 7,8-dihydroneopterin triphosphate biosynthesis; 7,8-dihydroneopterin triphosphate from GTP: step 1/1. Its function is as follows. Converts GTP to 7,8-dihydroneopterin triphosphate. In Bdellovibrio bacteriovorus (strain ATCC 15356 / DSM 50701 / NCIMB 9529 / HD100), this protein is GTP cyclohydrolase FolE2.